A 922-amino-acid polypeptide reads, in one-letter code: Pertactin autotransporter (922 aa).

The first 34 residues, 1–34, serve as a signal peptide directing secretion; that stretch reads MNMSLSRIVKAAPLRRTTLAMALGALGAAPAAYA. The Cell attachment site; involved in adhesion to various eukaryotic cell lines signature appears at 260–262; sequence RGD. 3 repeat units span residues 266–270, 271–275, and 276–280. The tract at residues 266-290 is 4 X 5 AA tandem repeats of G-G-A-V-P; the sequence is GGAVPGGAVPGGAVPGGFGPLLDGW. Residues 281-285 form a 4; approximate repeat; sequence GGFGP. Residues 561 to 619 are disordered; the sequence is SLVGAKAPPAPKPAPQPGPQPGPQPPQPPQPPQPPQPPQPPQRQPEAPAPQPPAGRELS. The span at 568–613 shows a compositional bias: pro residues; it reads PPAPKPAPQPGPQPGPQPPQPPQPPQPPQPPQPPQRQPEAPAPQPP. Positions 575–603 are 9 X 3 AA approximate repeats of P-Q-P; it reads PQPGPQPGPQPPQPPQPPQPPQPPQPPQR. Residues 654-922 enclose the Autotransporter domain; it reads LNPDAGGAWG…TFHAGYRYSW (269 aa).

Monomer.

Its subcellular location is the periplasm. It localises to the secreted. The protein localises to the cell surface. It is found in the cell outer membrane. In terms of biological role, agglutinogen that binds to eukaryotic cells; a process mediated by the R-G-D sequence. Pertactin may have a role in bacterial adhesion, and thus play a role in virulence. May contribute to the disease state of whooping cough. This Bordetella parapertussis (strain 12822 / ATCC BAA-587 / NCTC 13253) protein is Pertactin autotransporter (prn).